A 362-amino-acid polypeptide reads, in one-letter code: Phosphoserine aminotransferase (362 aa).

Arg-42 is a binding site for L-glutamate. Pyridoxal 5'-phosphate contacts are provided by residues 76–77 (AR), Trp-102, Thr-153, Asp-174, and Gln-197. An N6-(pyridoxal phosphate)lysine modification is found at Lys-198. Position 239 to 240 (239 to 240 (NT)) interacts with pyridoxal 5'-phosphate.

It belongs to the class-V pyridoxal-phosphate-dependent aminotransferase family. SerC subfamily. In terms of assembly, homodimer. Pyridoxal 5'-phosphate is required as a cofactor.

The protein resides in the cytoplasm. It carries out the reaction O-phospho-L-serine + 2-oxoglutarate = 3-phosphooxypyruvate + L-glutamate. The enzyme catalyses 4-(phosphooxy)-L-threonine + 2-oxoglutarate = (R)-3-hydroxy-2-oxo-4-phosphooxybutanoate + L-glutamate. It participates in amino-acid biosynthesis; L-serine biosynthesis; L-serine from 3-phospho-D-glycerate: step 2/3. Its pathway is cofactor biosynthesis; pyridoxine 5'-phosphate biosynthesis; pyridoxine 5'-phosphate from D-erythrose 4-phosphate: step 3/5. In terms of biological role, catalyzes the reversible conversion of 3-phosphohydroxypyruvate to phosphoserine and of 3-hydroxy-2-oxo-4-phosphonooxybutanoate to phosphohydroxythreonine. The polypeptide is Phosphoserine aminotransferase (Proteus mirabilis (strain HI4320)).